The chain runs to 503 residues: Putative cytochrome P450 71A28 (503 aa).

A helical membrane pass occupies residues Met-1–Leu-21. Cys-443 is a binding site for heme.

This sequence belongs to the cytochrome P450 family. Heme is required as a cofactor.

The protein localises to the membrane. The chain is Putative cytochrome P450 71A28 (CYP71A28) from Arabidopsis thaliana (Mouse-ear cress).